We begin with the raw amino-acid sequence, 300 residues long: Cation-efflux pump FieF (300 aa).

6 helical membrane-spanning segments follow: residues alanine 12 to tryptophan 32, isoleucine 39 to valine 59, alanine 82 to isoleucine 102, proline 114 to phenylalanine 134, methionine 151 to serine 171, and tryptophan 172 to tyrosine 192. Residues aspartate 45 and aspartate 49 each coordinate Zn(2+). Histidine 153 and aspartate 157 together coordinate Zn(2+).

Belongs to the cation diffusion facilitator (CDF) transporter (TC 2.A.4) family. FieF subfamily. As to quaternary structure, homodimer.

It is found in the cell inner membrane. It catalyses the reaction Zn(2+)(in) + H(+)(out) = Zn(2+)(out) + H(+)(in). It carries out the reaction Cd(2+)(in) + H(+)(out) = Cd(2+)(out) + H(+)(in). The catalysed reaction is Fe(2+)(in) + H(+)(out) = Fe(2+)(out) + H(+)(in). Its function is as follows. Divalent metal cation transporter which exports Zn(2+), Cd(2+) and possibly Fe(2+). May be involved in zinc and iron detoxification by efflux. The sequence is that of Cation-efflux pump FieF from Escherichia fergusonii (strain ATCC 35469 / DSM 13698 / CCUG 18766 / IAM 14443 / JCM 21226 / LMG 7866 / NBRC 102419 / NCTC 12128 / CDC 0568-73).